The following is a 1071-amino-acid chain: Carbamoyl phosphate synthase large chain (1071 aa).

The interval 1 to 403 (MPKRTDLKSI…SFQKALRGLE (403 aa)) is carboxyphosphate synthetic domain. Residues Arg129, Arg169, Gly175, Gly176, Gln208, Val210, Glu215, Gly241, Val242, His243, Gln285, and Glu299 each coordinate ATP. Residues 133–328 (KEAMEKIGLS…IAKVAAKLAV (196 aa)) enclose the ATP-grasp 1 domain. Mg(2+)-binding residues include Gln285, Glu299, and Asn301. Mn(2+) contacts are provided by Gln285, Glu299, and Asn301. The tract at residues 404–548 (TGLCGFNPRS…YSTYEEECES (145 aa)) is oligomerization domain. Residues 549-930 (RPSDRKKVMI…AYYKAQLGAG (382 aa)) are carbamoyl phosphate synthetic domain. An ATP-grasp 2 domain is found at 673–864 (QKVLNDLGLR…LAKVGARCMA (192 aa)). 10 residues coordinate ATP: Arg709, Phe748, Leu750, Glu755, Gly780, Ile781, His782, Ser783, Gln823, and Glu835. 3 residues coordinate Mg(2+): Gln823, Glu835, and Asn837. Positions 823, 835, and 837 each coordinate Mn(2+). In terms of domain architecture, MGS-like spans 931 to 1071 (ERLNPTGKIF…ELHGRLKNRN (141 aa)). Residues 931–1071 (ERLNPTGKIF…ELHGRLKNRN (141 aa)) are allosteric domain.

The protein belongs to the CarB family. In terms of assembly, composed of two chains; the small (or glutamine) chain promotes the hydrolysis of glutamine to ammonia, which is used by the large (or ammonia) chain to synthesize carbamoyl phosphate. Tetramer of heterodimers (alpha,beta)4. Mg(2+) serves as cofactor. It depends on Mn(2+) as a cofactor.

The enzyme catalyses hydrogencarbonate + L-glutamine + 2 ATP + H2O = carbamoyl phosphate + L-glutamate + 2 ADP + phosphate + 2 H(+). The catalysed reaction is hydrogencarbonate + NH4(+) + 2 ATP = carbamoyl phosphate + 2 ADP + phosphate + 2 H(+). The protein operates within amino-acid biosynthesis; L-arginine biosynthesis; carbamoyl phosphate from bicarbonate: step 1/1. It functions in the pathway pyrimidine metabolism; UMP biosynthesis via de novo pathway; (S)-dihydroorotate from bicarbonate: step 1/3. Functionally, large subunit of the glutamine-dependent carbamoyl phosphate synthetase (CPSase). CPSase catalyzes the formation of carbamoyl phosphate from the ammonia moiety of glutamine, carbonate, and phosphate donated by ATP, constituting the first step of 2 biosynthetic pathways, one leading to arginine and/or urea and the other to pyrimidine nucleotides. The large subunit (synthetase) binds the substrates ammonia (free or transferred from glutamine from the small subunit), hydrogencarbonate and ATP and carries out an ATP-coupled ligase reaction, activating hydrogencarbonate by forming carboxy phosphate which reacts with ammonia to form carbamoyl phosphate. The chain is Carbamoyl phosphate synthase large chain from Neisseria meningitidis serogroup B (strain ATCC BAA-335 / MC58).